Consider the following 311-residue polypeptide: Putative dihydroorotate dehydrogenase A (fumarate) (311 aa).

Substrate contacts are provided by residues Lys45, 69-73, and Asn128; that span reads NSMGL. FMN is bound at residue 45-46; that stretch reads KT. Residue Asn128 participates in FMN binding. Residue Cys131 is the Nucleophile of the active site. 2 residues coordinate FMN: Lys165 and Val193. 194–195 lines the substrate pocket; that stretch reads NS. Residues Gly220, 248-249, and 270-271 each bind FMN; these read GG and GT.

Belongs to the dihydroorotate dehydrogenase family. Type 1 subfamily. As to quaternary structure, homodimer. FMN serves as cofactor.

It localises to the cytoplasm. The catalysed reaction is (S)-dihydroorotate + fumarate = orotate + succinate. It participates in pyrimidine metabolism; UMP biosynthesis via de novo pathway. Its function is as follows. Catalyzes the conversion of dihydroorotate to orotate with fumarate as the electron acceptor. The chain is Putative dihydroorotate dehydrogenase A (fumarate) (pyrD) from Streptococcus pyogenes serotype M1.